A 159-amino-acid polypeptide reads, in one-letter code: S-ribosylhomocysteine lyase (159 aa).

Fe cation contacts are provided by histidine 53, histidine 57, and cysteine 124.

The protein belongs to the LuxS family. As to quaternary structure, homodimer. It depends on Fe cation as a cofactor.

The enzyme catalyses S-(5-deoxy-D-ribos-5-yl)-L-homocysteine = (S)-4,5-dihydroxypentane-2,3-dione + L-homocysteine. In terms of biological role, involved in the synthesis of autoinducer 2 (AI-2) which is secreted by bacteria and is used to communicate both the cell density and the metabolic potential of the environment. The regulation of gene expression in response to changes in cell density is called quorum sensing. Catalyzes the transformation of S-ribosylhomocysteine (RHC) to homocysteine (HC) and 4,5-dihydroxy-2,3-pentadione (DPD). The polypeptide is S-ribosylhomocysteine lyase (Desulfotalea psychrophila (strain LSv54 / DSM 12343)).